We begin with the raw amino-acid sequence, 467 residues long: Coiled-coil domain-containing protein 174 (467 aa).

Disordered regions lie at residues 40–77 (VFGK…EEQK) and 124–162 (EMEA…SEEW). Positions 63 to 99 (NRAEKDAEQKIEEQKTLDKAREKLEEKAKLYEKMTKG) form a coiled coil. 2 stretches are compositionally biased toward basic and acidic residues: residues 64–77 (RAEK…EEQK) and 124–139 (EMEA…KAGE). Ser-197 carries the post-translational modification Phosphoserine. Residues 267 to 309 (LEMLREQTTDQRTKRENIKEKRKAILEARLAKLRQKKMKKSKE) are a coiled coil. Disordered stretches follow at residues 299 to 363 (LRQK…HIRE) and 378 to 453 (RQSD…TVTF). Residues 324–336 (PLPPEPEAVPTPR) are compositionally biased toward pro residues. 2 stretches are compositionally biased toward basic and acidic residues: residues 348 to 363 (VQER…HIRE) and 378 to 389 (RQSDLRAERDPE). The span at 425-437 (PDQSHGPSPEHTS) shows a compositional bias: polar residues. The segment covering 439–448 (TPAPDNPPQA) has biased composition (pro residues).

As to expression, widely expressed.

It is found in the nucleus. In terms of biological role, probably involved in neuronal development. This Homo sapiens (Human) protein is Coiled-coil domain-containing protein 174 (CCDC174).